Reading from the N-terminus, the 184-residue chain is ATP synthase subunit delta (184 aa).

Belongs to the ATPase delta chain family. As to quaternary structure, F-type ATPases have 2 components, F(1) - the catalytic core - and F(0) - the membrane proton channel. F(1) has five subunits: alpha(3), beta(3), gamma(1), delta(1), epsilon(1). F(0) has three main subunits: a(1), b(2) and c(10-14). The alpha and beta chains form an alternating ring which encloses part of the gamma chain. F(1) is attached to F(0) by a central stalk formed by the gamma and epsilon chains, while a peripheral stalk is formed by the delta and b chains.

Its subcellular location is the cell inner membrane. F(1)F(0) ATP synthase produces ATP from ADP in the presence of a proton or sodium gradient. F-type ATPases consist of two structural domains, F(1) containing the extramembraneous catalytic core and F(0) containing the membrane proton channel, linked together by a central stalk and a peripheral stalk. During catalysis, ATP synthesis in the catalytic domain of F(1) is coupled via a rotary mechanism of the central stalk subunits to proton translocation. In terms of biological role, this protein is part of the stalk that links CF(0) to CF(1). It either transmits conformational changes from CF(0) to CF(1) or is implicated in proton conduction. The sequence is that of ATP synthase subunit delta from Rickettsia conorii (strain ATCC VR-613 / Malish 7).